The sequence spans 129 residues: MPKMFLLFSHKLTDDQINDARKNLKVDEFIYLPKELQELWSNIPPDVDDIDNYLKPIKEFLEKHAKPNDYVLIQGDFGATYKMVNFAIDKNLIPIYSTTKRIAKDIYKDGKIITIRKFKHCRFRKYNPY.

This is an uncharacterized protein from Methanocaldococcus jannaschii (strain ATCC 43067 / DSM 2661 / JAL-1 / JCM 10045 / NBRC 100440) (Methanococcus jannaschii).